Consider the following 49-residue polypeptide: Astexin-3 (49 aa).

Residues 1–25 constitute a propeptide that is removed on maturation; that stretch reads MRTYNRSLPARAGLTDLGKVTTHTK. A cross-link (isoaspartyl glycine isopeptide (Gly-Asp)) is located at residues 26 to 34; the sequence is GPTPMVGLD.

Post-translationally, this lasso peptide is hydrolyzed to a linear form by the isopeptidase AtxE2, in vitro. The isopeptidase AtxE2 only recognizes the threaded form (but not the unthreaded form).

Its subcellular location is the cytoplasm. The protein resides in the secreted. Shows weak antimicrobial activity against its phylogenetic relative Caulobacter crescentus. Does not show activity against other bacteria tested (E.coli, Vibrio sp, Burkhoderia thailandensis, and Salmonella newport). The polypeptide is Astexin-3 (Asticcacaulis excentricus (strain ATCC 15261 / DSM 4724 / KCTC 12464 / NCIMB 9791 / VKM B-1370 / CB 48)).